The following is a 363-amino-acid chain: Phosphoserine aminotransferase (363 aa).

Arg-42 contacts L-glutamate. Residues 76 to 77, Trp-102, Thr-156, Asp-175, and Gln-198 each bind pyridoxal 5'-phosphate; that span reads GR. N6-(pyridoxal phosphate)lysine is present on Lys-199. 240–241 lines the pyridoxal 5'-phosphate pocket; sequence NT.

It belongs to the class-V pyridoxal-phosphate-dependent aminotransferase family. SerC subfamily. In terms of assembly, homodimer. Pyridoxal 5'-phosphate is required as a cofactor.

It localises to the cytoplasm. The enzyme catalyses O-phospho-L-serine + 2-oxoglutarate = 3-phosphooxypyruvate + L-glutamate. It carries out the reaction 4-(phosphooxy)-L-threonine + 2-oxoglutarate = (R)-3-hydroxy-2-oxo-4-phosphooxybutanoate + L-glutamate. It participates in amino-acid biosynthesis; L-serine biosynthesis; L-serine from 3-phospho-D-glycerate: step 2/3. The protein operates within cofactor biosynthesis; pyridoxine 5'-phosphate biosynthesis; pyridoxine 5'-phosphate from D-erythrose 4-phosphate: step 3/5. In terms of biological role, catalyzes the reversible conversion of 3-phosphohydroxypyruvate to phosphoserine and of 3-hydroxy-2-oxo-4-phosphonooxybutanoate to phosphohydroxythreonine. The protein is Phosphoserine aminotransferase of Shewanella baltica (strain OS195).